Here is a 210-residue protein sequence, read N- to C-terminus: Na(+)-translocating NADH-quinone reductase subunit D (210 aa).

6 helical membrane passes run 10 to 30 (VLIGPIVSNNPIALQILGVCS), 42 to 62 (LVMTIALTAVCALSNLFISLI), 72 to 92 (IIVQMTIIASLVIVVDQVLQA), 103 to 123 (VFVGLIITNCIVMGRAEAYAM), 131 to 151 (FMDGIGNGLGYGAILLSVGFV), and 178 to 198 (NGLLLLPPSAFFLIGALIWII).

The protein belongs to the NqrDE/RnfAE family. In terms of assembly, composed of six subunits; NqrA, NqrB, NqrC, NqrD, NqrE and NqrF.

It is found in the cell inner membrane. The catalysed reaction is a ubiquinone + n Na(+)(in) + NADH + H(+) = a ubiquinol + n Na(+)(out) + NAD(+). Functionally, NQR complex catalyzes the reduction of ubiquinone-1 to ubiquinol by two successive reactions, coupled with the transport of Na(+) ions from the cytoplasm to the periplasm. NqrA to NqrE are probably involved in the second step, the conversion of ubisemiquinone to ubiquinol. The protein is Na(+)-translocating NADH-quinone reductase subunit D of Shewanella pealeana (strain ATCC 700345 / ANG-SQ1).